The sequence spans 362 residues: Peptide chain release factor 1 (362 aa).

Gln240 bears the N5-methylglutamine mark.

This sequence belongs to the prokaryotic/mitochondrial release factor family. Methylated by PrmC. Methylation increases the termination efficiency of RF1.

It is found in the cytoplasm. Peptide chain release factor 1 directs the termination of translation in response to the peptide chain termination codons UAG and UAA. The polypeptide is Peptide chain release factor 1 (Bifidobacterium longum (strain NCC 2705)).